A 339-amino-acid polypeptide reads, in one-letter code: UDP-glucose 4-epimerase (339 aa).

NAD(+) contacts are provided by residues 12–13, 32–37, 59–60, 81–85, N100, S125, Y150, K154, and F179; these read FI, DNLCNS, DI, and FAGLK. Substrate-binding residues include S125 and Y150. The active-site Proton acceptor is Y150. Substrate-binding positions include N180, 200 to 201, 217 to 219, R232, and 293 to 296; these read NL, AVF, and RAGD.

Belongs to the NAD(P)-dependent epimerase/dehydratase family. As to quaternary structure, homodimer. NAD(+) serves as cofactor.

It catalyses the reaction UDP-alpha-D-glucose = UDP-alpha-D-galactose. It functions in the pathway carbohydrate metabolism; galactose metabolism. Its function is as follows. Involved in the metabolism of galactose. Plays an essential role in the incorporation of galactose into meningococcal lipopolysaccharide surface molecules, which are important for pathogenesis. Catalyzes the conversion of UDP-galactose (UDP-Gal) to UDP-glucose (UDP-Glc) through a mechanism involving the transient reduction of NAD. This chain is UDP-glucose 4-epimerase (galE), found in Neisseria meningitidis serogroup C.